A 743-amino-acid chain; its full sequence is MSLIRTRKKIVSSAIASSLSMIATTAMAQEAVSQLPTIHTKATQEESLKVDQSANSKFVAPLLDTPKSVSVISKQLIEDTKVTTLADALRTVPGITLGAGEGGNPNGDRPFIRGYSSESSMYIDGIRNSTSQNREMFAVEQVEVTKGSASAMGGAGSVGGSINMISKVAKKGDFLEGSVAAGTDNYQRITLDGNKDFGNGIAARVAVLGHQNEKAGQSNGAEYKRVGIAPSITFGLDTPTRATLSYYYLQTDDKPDSGIPYWDSSLGKAQGKPAEVKQGTYYGWKDRDFQKQENHIGTIKLEHDLTDNITITNTAMYAKSKNDYVWTNPDDSKGNVGKGLVWHRLNSAITDSETFTDQLALTGKFDTGFLKHRFNVGAEYSKQKTDKGGYNIIDAKGNVSSTGFYSDCSDLSTNWCTSLNGPTQKPFVDRLQARPDFDATVESTSVYLLDNIEITPKWLLDLGLRWDKFEAEQNFLATSSAAAYTAKNNSDFVTYQAGITFKPTENGSIYTSYATSASPVGLNAGWGDNSETINANNQMIDPEEAQTFEIGTKWDFLDNHLNLTAAIFRTEKQNTRVQIDPTTYANVGESKVDGFELGLNGEITDKWNISAGYTYLDSELTKNGKSCRSGKCTDQSIYNGNQMPNVPKQAATLWTTYKVLPQLTVGAGAVYSDKVYGDVANTKWVPSYVRYDAMARYNVNKNVDLQLNINNLSDKRYFTKAYASHYATEAEGRSAVLAVNFKY.

Residues 1-28 (MSLIRTRKKIVSSAIASSLSMIATTAMA) form the signal peptide. The 107-residue stretch at 61 to 167 (PLLDTPKSVS…VGGSINMISK (107 aa)) folds into the TBDR plug domain. Positions 172–743 (GDFLEGSVAA…SAVLAVNFKY (572 aa)) constitute a TBDR beta-barrel domain. Disulfide bonds link cysteine 408-cysteine 416 and cysteine 627-cysteine 632.

This sequence belongs to the TonB-dependent receptor family.

It localises to the cell outer membrane. In terms of biological role, probably involved in the initial step of iron uptake by binding iron chelating siderophores, thereby allowing extraction of iron from the environment. May bind the siderophore, ferric enterobactin, with micromolar affinity. In Acinetobacter baumannii (strain ATCC 19606 / DSM 30007 / JCM 6841 / CCUG 19606 / CIP 70.34 / NBRC 109757 / NCIMB 12457 / NCTC 12156 / 81), this protein is Probable TonB-dependent siderophore receptor PiuA.